A 181-amino-acid chain; its full sequence is Peptidyl-tRNA hydrolase (181 aa).

Residue Tyr14 participates in tRNA binding. The active-site Proton acceptor is His19. Tyr62, Asn64, and Asn108 together coordinate tRNA.

It belongs to the PTH family. Monomer.

The protein localises to the cytoplasm. It carries out the reaction an N-acyl-L-alpha-aminoacyl-tRNA + H2O = an N-acyl-L-amino acid + a tRNA + H(+). Functionally, hydrolyzes ribosome-free peptidyl-tRNAs (with 1 or more amino acids incorporated), which drop off the ribosome during protein synthesis, or as a result of ribosome stalling. Its function is as follows. Catalyzes the release of premature peptidyl moieties from peptidyl-tRNA molecules trapped in stalled 50S ribosomal subunits, and thus maintains levels of free tRNAs and 50S ribosomes. The polypeptide is Peptidyl-tRNA hydrolase (Campylobacter jejuni subsp. jejuni serotype O:23/36 (strain 81-176)).